The chain runs to 223 residues: Probable transaldolase (223 aa).

Lys-92 (schiff-base intermediate with substrate) is an active-site residue.

This sequence belongs to the transaldolase family. Type 3B subfamily.

The protein resides in the cytoplasm. It carries out the reaction D-sedoheptulose 7-phosphate + D-glyceraldehyde 3-phosphate = D-erythrose 4-phosphate + beta-D-fructose 6-phosphate. The protein operates within carbohydrate degradation; pentose phosphate pathway; D-glyceraldehyde 3-phosphate and beta-D-fructose 6-phosphate from D-ribose 5-phosphate and D-xylulose 5-phosphate (non-oxidative stage): step 2/3. In terms of biological role, transaldolase is important for the balance of metabolites in the pentose-phosphate pathway. The chain is Probable transaldolase from Thermus thermophilus (strain ATCC 27634 / DSM 579 / HB8).